Here is a 366-residue protein sequence, read N- to C-terminus: Peptide chain release factor 2 (366 aa).

Position 251 is an N5-methylglutamine (Q251).

This sequence belongs to the prokaryotic/mitochondrial release factor family. Post-translationally, methylated by PrmC. Methylation increases the termination efficiency of RF2.

It is found in the cytoplasm. Peptide chain release factor 2 directs the termination of translation in response to the peptide chain termination codons UGA and UAA. The sequence is that of Peptide chain release factor 2 (prfB) from Bacillus subtilis (strain 168).